The primary structure comprises 1054 residues: Reverse gyrase (1054 aa).

Residues Met1 to Leu43 form an RG N-terminal-type zinc finger. Residues Cys10, Cys13, Cys27, and Cys35 each contribute to the Zn(2+) site. A disulfide bridge links Cys35 with Cys650. ATP contacts are provided by Gln61, Lys84, Thr85, and Ser86. The region spanning Ala65 to Gly245 is the Helicase ATP-binding domain. A DEAD box motif is present at residues Asp182–Asp185. Positions Pro352–Arg427 are latch region. A topoisomerase I region spans residues Asp502–Asp1054. Residues Pro506–Thr662 form the Toprim domain. Glu512 contacts Mg(2+). The segment at Ile581 to Ser609 adopts an RG C-terminal-type zinc-finger fold. Residues Cys584, Cys587, Cys598, and Cys601 each contribute to the Zn(2+) site. Mg(2+) is bound at residue Asp631. In terms of domain architecture, Topo IA-type catalytic spans Asp677 to Asp1054. Tyr809 (O-(5'-phospho-DNA)-tyrosine intermediate) is an active-site residue.

It in the N-terminal section; belongs to the DEAD box helicase family. DDVD subfamily. The protein in the C-terminal section; belongs to the type IA topoisomerase family. As to quaternary structure, monomer. Requires Zn(2+) as cofactor. Mg(2+) is required as a cofactor.

The protein localises to the cytoplasm. It carries out the reaction ATP + H2O = ADP + phosphate + H(+). Modifies the topological state of DNA by introducing positive supercoils in an ATP-dependent process, increasing the linking number in steps of +1. Very efficient supercoiling occurs on relaxed DNA with a single-stranded bubble; the minimal bubble is 20 nucleotides (nt) and up to 10 positive supercoils can be introduced into a 3.1 kb plasmid with a 50 nt bubble. Positively supercoils DNA with all (d)NTPS, although it requires about 10-fold more of non-(d)ATP. In the absence of ATP (or at low levels of enzyme), or in the presence of ADP, relaxes negative supercoils. Only relaxes positive supercoils when the substrate contains a bubble. Also promotes strand annealing of complementary ssDNA circles. Binds to single-stranded DNA, transiently cleaves and then rejoins the ends, introducing a positive supercoil in the process. The scissile phosphodiester is attacked by the catalytic tyrosine of the enzyme, resulting in the formation of a DNA-(5'-phosphotyrosyl)-enzyme intermediate. Probably involved in rewinding DNA strands in regions of the chromosome that have opened up to allow replication, transcription, DNA repair and/or for DNA protection. Its function is as follows. In vitro protects DNA against degradation at 90 degrees Celsius, reducing dsDNA breakage about 8-fold; ATP hydrolysis is not necessary, while ADP decreases the protection somewhat. Coats all forms of dsDNA; the DNA is protected against cleavage and transcription. Recognizes nicked DNA and forms a coat at the nicking site, which may help hold DNA in a structure amenable to repair. The protein is Reverse gyrase of Archaeoglobus fulgidus (strain ATCC 49558 / DSM 4304 / JCM 9628 / NBRC 100126 / VC-16).